The chain runs to 427 residues: Enolase (427 aa).

Residue Gln162 coordinates (2R)-2-phosphoglycerate. Residue Glu204 is the Proton donor of the active site. 3 residues coordinate Mg(2+): Asp241, Glu284, and Asp311. Residues Lys336, Arg365, Ser366, and Lys387 each coordinate (2R)-2-phosphoglycerate. Lys336 acts as the Proton acceptor in catalysis.

It belongs to the enolase family. Mg(2+) is required as a cofactor.

The protein localises to the cytoplasm. Its subcellular location is the secreted. It is found in the cell surface. The catalysed reaction is (2R)-2-phosphoglycerate = phosphoenolpyruvate + H2O. The protein operates within carbohydrate degradation; glycolysis; pyruvate from D-glyceraldehyde 3-phosphate: step 4/5. Its function is as follows. Catalyzes the reversible conversion of 2-phosphoglycerate (2-PG) into phosphoenolpyruvate (PEP). It is essential for the degradation of carbohydrates via glycolysis. The polypeptide is Enolase (Natranaerobius thermophilus (strain ATCC BAA-1301 / DSM 18059 / JW/NM-WN-LF)).